Here is a 270-residue protein sequence, read N- to C-terminus: Bis(5'-nucleosyl)-tetraphosphatase, symmetrical (270 aa).

Belongs to the Ap4A hydrolase family.

It carries out the reaction P(1),P(4)-bis(5'-adenosyl) tetraphosphate + H2O = 2 ADP + 2 H(+). In terms of biological role, hydrolyzes diadenosine 5',5'''-P1,P4-tetraphosphate to yield ADP. The protein is Bis(5'-nucleosyl)-tetraphosphatase, symmetrical of Cellvibrio japonicus (strain Ueda107) (Pseudomonas fluorescens subsp. cellulosa).